The chain runs to 180 residues: Adenine phosphoribosyltransferase (180 aa).

The protein belongs to the purine/pyrimidine phosphoribosyltransferase family. In terms of assembly, homodimer.

It is found in the cytoplasm. It carries out the reaction AMP + diphosphate = 5-phospho-alpha-D-ribose 1-diphosphate + adenine. It functions in the pathway purine metabolism; AMP biosynthesis via salvage pathway; AMP from adenine: step 1/1. Catalyzes a salvage reaction resulting in the formation of AMP, that is energically less costly than de novo synthesis. This is Adenine phosphoribosyltransferase from Mycoplasma genitalium (strain ATCC 33530 / DSM 19775 / NCTC 10195 / G37) (Mycoplasmoides genitalium).